Here is a 98-residue protein sequence, read N- to C-terminus: High mobility group nucleosome-binding domain-containing protein 3 (98 aa).

4 stretches are compositionally biased toward basic and acidic residues: residues 1 to 25, 39 to 52, 61 to 71, and 80 to 98; these read MPKR…EPTR, PEPK…KEPG, GKKDEKQEAAK, and GENK…DKNE. Residues 1–98 are disordered; it reads MPKRKSPEGA…KTESVGDKNE (98 aa).

This sequence belongs to the HMGN family.

It localises to the nucleus. The protein is High mobility group nucleosome-binding domain-containing protein 3 (HMGN3) of Gallus gallus (Chicken).